The chain runs to 24 residues: Ascaphin-7 (24 aa).

Expressed by the skin glands.

It is found in the secreted. Antimicrobial peptide that shows higher potency against Gram-negative bacteria than against Gram-positive bacteria. Has a very week hemolytic activity. This Ascaphus truei (Coastal tailed frog) protein is Ascaphin-7.